We begin with the raw amino-acid sequence, 244 residues long: Ribonuclease PH (244 aa).

Phosphate is bound by residues R87 and 125-127 (GTR).

Belongs to the RNase PH family. Homohexameric ring arranged as a trimer of dimers.

It carries out the reaction tRNA(n+1) + phosphate = tRNA(n) + a ribonucleoside 5'-diphosphate. Phosphorolytic 3'-5' exoribonuclease that plays an important role in tRNA 3'-end maturation. Removes nucleotide residues following the 3'-CCA terminus of tRNAs; can also add nucleotides to the ends of RNA molecules by using nucleoside diphosphates as substrates, but this may not be physiologically important. Probably plays a role in initiation of 16S rRNA degradation (leading to ribosome degradation) during starvation. The protein is Ribonuclease PH of Synechococcus sp. (strain JA-2-3B'a(2-13)) (Cyanobacteria bacterium Yellowstone B-Prime).